The following is a 255-amino-acid chain: Hemin import ATP-binding protein HmuV (255 aa).

An ABC transporter domain is found at 2 to 238 (LRVENLHVRR…EPLKAVFGLE (237 aa)). Residue 34–41 (GPNGAGKS) participates in ATP binding.

Belongs to the ABC transporter superfamily. Heme (hemin) importer (TC 3.A.1.14.5) family. In terms of assembly, the complex is composed of two ATP-binding proteins (HmuV), two transmembrane proteins (HmuU) and a solute-binding protein (HmuT).

It is found in the cell inner membrane. In terms of biological role, part of the ABC transporter complex HmuTUV involved in hemin import. Responsible for energy coupling to the transport system. This is Hemin import ATP-binding protein HmuV from Pseudomonas fluorescens (strain ATCC BAA-477 / NRRL B-23932 / Pf-5).